The chain runs to 558 residues: uncharacterized protein (558 aa).

6 consecutive transmembrane segments (helical) span residues 63-83, 90-110, 143-163, 168-188, 226-246, and 258-278; these read LTGI…PSIY, VTFG…TYWI, VAAV…TLYG, VFVT…ATNC, SLGS…VLLV, and VLIL…ILAW. The region spanning 279–330 is the HAMP domain; that stretch reads LTAAPVRVVRAALKRVEQGDLRGDLVVFDGTELGELQRGFNAMVNGLRERER. In terms of domain architecture, Guanylate cyclase spans 362 to 486; that stretch reads AVVFVDIVGS…KPVNQAARLC (125 aa). The interval 529–558 is disordered; it reads TQLASPHRRPPGSIHLTAEHAEEIRTDRLG. Residues 545–558 are compositionally biased toward basic and acidic residues; that stretch reads TAEHAEEIRTDRLG.

It belongs to the adenylyl cyclase class-3 family.

Its subcellular location is the cell membrane. This is an uncharacterized protein from Mycobacterium tuberculosis (strain CDC 1551 / Oshkosh).